Here is a 214-residue protein sequence, read N- to C-terminus: Ribonuclease HII (214 aa).

Residues 26 to 214 form the RNase H type-2 domain; the sequence is EIVCGVDEAG…PVREAFDLIR (189 aa). Residues D32, E33, and D124 each coordinate a divalent metal cation.

Belongs to the RNase HII family. Mn(2+) serves as cofactor. Requires Mg(2+) as cofactor.

It is found in the cytoplasm. The catalysed reaction is Endonucleolytic cleavage to 5'-phosphomonoester.. Functionally, endonuclease that specifically degrades the RNA of RNA-DNA hybrids. The protein is Ribonuclease HII of Burkholderia thailandensis (strain ATCC 700388 / DSM 13276 / CCUG 48851 / CIP 106301 / E264).